The chain runs to 372 residues: Queuine tRNA-ribosyltransferase (372 aa).

The active-site Proton acceptor is the D89. Substrate is bound by residues 89 to 93 (DSGGF), D161, and G232. The interval 262-268 (GIGDLPS) is RNA binding. D281 functions as the Nucleophile in the catalytic mechanism. The segment at 286–290 (TKAAR) is RNA binding; important for wobble base 34 recognition. C319, C321, C324, and H351 together coordinate Zn(2+).

The protein belongs to the queuine tRNA-ribosyltransferase family. As to quaternary structure, homodimer. Within each dimer, one monomer is responsible for RNA recognition and catalysis, while the other monomer binds to the replacement base PreQ1. Requires Zn(2+) as cofactor.

It carries out the reaction 7-aminomethyl-7-carbaguanine + guanosine(34) in tRNA = 7-aminomethyl-7-carbaguanosine(34) in tRNA + guanine. Its pathway is tRNA modification; tRNA-queuosine biosynthesis. In terms of biological role, catalyzes the base-exchange of a guanine (G) residue with the queuine precursor 7-aminomethyl-7-deazaguanine (PreQ1) at position 34 (anticodon wobble position) in tRNAs with GU(N) anticodons (tRNA-Asp, -Asn, -His and -Tyr). Catalysis occurs through a double-displacement mechanism. The nucleophile active site attacks the C1' of nucleotide 34 to detach the guanine base from the RNA, forming a covalent enzyme-RNA intermediate. The proton acceptor active site deprotonates the incoming PreQ1, allowing a nucleophilic attack on the C1' of the ribose to form the product. After dissociation, two additional enzymatic reactions on the tRNA convert PreQ1 to queuine (Q), resulting in the hypermodified nucleoside queuosine (7-(((4,5-cis-dihydroxy-2-cyclopenten-1-yl)amino)methyl)-7-deazaguanosine). This is Queuine tRNA-ribosyltransferase from Chlamydia muridarum (strain MoPn / Nigg).